The following is a 189-amino-acid chain: uncharacterized protein (189 aa).

4 helical membrane-spanning segments follow: residues Leu49–Phe69, Leu78–Phe98, Leu102–Ile122, and Val124–Ala144. The tract at residues Ser165–Ala189 is disordered.

The protein belongs to the chlamydial CPn_0442/CT_006/TC_0274 family.

Its subcellular location is the cell membrane. This is an uncharacterized protein from Chlamydia trachomatis serovar D (strain ATCC VR-885 / DSM 19411 / UW-3/Cx).